A 94-amino-acid chain; its full sequence is Large ribosomal subunit protein uL23 (94 aa).

This sequence belongs to the universal ribosomal protein uL23 family. Part of the 50S ribosomal subunit. Contacts protein L29, and trigger factor when it is bound to the ribosome.

Functionally, one of the early assembly proteins it binds 23S rRNA. One of the proteins that surrounds the polypeptide exit tunnel on the outside of the ribosome. Forms the main docking site for trigger factor binding to the ribosome. This chain is Large ribosomal subunit protein uL23, found in Geobacter sulfurreducens (strain ATCC 51573 / DSM 12127 / PCA).